Consider the following 180-residue polypeptide: Large ribosomal subunit protein uL6 (180 aa).

The protein belongs to the universal ribosomal protein uL6 family. As to quaternary structure, part of the 50S ribosomal subunit.

Its function is as follows. This protein binds to the 23S rRNA, and is important in its secondary structure. It is located near the subunit interface in the base of the L7/L12 stalk, and near the tRNA binding site of the peptidyltransferase center. This Anaeromyxobacter sp. (strain Fw109-5) protein is Large ribosomal subunit protein uL6.